Here is a 160-residue protein sequence, read N- to C-terminus: Lymphocyte antigen 96 (160 aa).

Positions 1 to 18 (MLPFLFFSTLFSSIFTEA) are cleaved as a signal peptide. 3 cysteine pairs are disulfide-bonded: C25–C51, C37–C148, and C95–C105. N-linked (GlcNAc...) asparagine glycosylation is present at N26. N-linked (GlcNAc...) asparagine glycosylation occurs at N114. The interaction with lipopolysaccharide stretch occupies residues 119-123 (FSFKG).

As to quaternary structure, heterogeneous homomer formed from homodimers; disulfide-linked. Belongs to the lipopolysaccharide (LPS) receptor, a multi-protein complex containing at least CD14, LY96 and TLR4. Binds to the extracellular domains of TLR2 and TLR4. Ligand binding induces interaction with TLR4 and oligomerization of the complex. N-glycosylated; high-mannose.

It is found in the secreted. The protein localises to the extracellular space. Functionally, binds bacterial lipopolysaccharide (LPS). Cooperates with TLR4 in the innate immune response to bacterial lipopolysaccharide (LPS), and with TLR2 in the response to cell wall components from Gram-positive and Gram-negative bacteria. Enhances TLR4-dependent activation of NF-kappa-B. Cells expressing both LY96 and TLR4, but not TLR4 alone, respond to LPS. This chain is Lymphocyte antigen 96 (LY96), found in Homo sapiens (Human).